The sequence spans 363 residues: Endopolygalacturonase 1 (363 aa).

An N-terminal signal peptide occupies residues 1 to 17 (MVSYLFVLGALASVAIA). A propeptide spanning residues 18-26 (SPVPELKAR) is cleaved from the precursor. C29 and C44 are disulfide-bonded. 4 PbH1 repeats span residues 188-209 (STGVYISGADVKNQDDCLAVNS), 210-230 (GTNITFTGGTCSGGHGLSIGS), 239-260 (VKSVSITNSKIINSDNGVRIKT), and 268-290 (VSDITYSGITLSNIAKYGIVIEQ). The active-site Proton donor is D202. C204 and C220 are disulfide-bonded. N212 carries N-linked (GlcNAc...) asparagine glycosylation. The active site involves H224. Disulfide bonds link C330/C333 and C352/C363.

It belongs to the glycosyl hydrolase 28 family.

Its subcellular location is the secreted. The catalysed reaction is (1,4-alpha-D-galacturonosyl)n+m + H2O = (1,4-alpha-D-galacturonosyl)n + (1,4-alpha-D-galacturonosyl)m.. Its function is as follows. Involved in maceration and soft-rotting of plant tissue. Hydrolyzes the 1,4-alpha glycosidic bonds of de-esterified pectate in the smooth region of the plant cell wall. The chain is Endopolygalacturonase 1 (PG1) from Colletotrichum lindemuthianum (Bean anthracnose fungus).